The chain runs to 637 residues: Threonine--tRNA ligase (637 aa).

The region spanning 1 to 61 (MPVITLPDGS…DKDAELAIVT (61 aa)) is the TGS domain. A catalytic region spans residues 242 to 533 (DHRKIGKKLG…LIEHYEGAFP (292 aa)). Residues cysteine 333, histidine 384, and histidine 510 each coordinate Zn(2+).

It belongs to the class-II aminoacyl-tRNA synthetase family. Homodimer. Requires Zn(2+) as cofactor.

It localises to the cytoplasm. The enzyme catalyses tRNA(Thr) + L-threonine + ATP = L-threonyl-tRNA(Thr) + AMP + diphosphate + H(+). Catalyzes the attachment of threonine to tRNA(Thr) in a two-step reaction: L-threonine is first activated by ATP to form Thr-AMP and then transferred to the acceptor end of tRNA(Thr). Also edits incorrectly charged L-seryl-tRNA(Thr). The polypeptide is Threonine--tRNA ligase (Hahella chejuensis (strain KCTC 2396)).